The sequence spans 139 residues: Putative pre-16S rRNA nuclease (139 aa).

Belongs to the YqgF nuclease family.

The protein resides in the cytoplasm. Functionally, could be a nuclease involved in processing of the 5'-end of pre-16S rRNA. This Streptococcus gordonii (strain Challis / ATCC 35105 / BCRC 15272 / CH1 / DL1 / V288) protein is Putative pre-16S rRNA nuclease.